The sequence spans 397 residues: Argininosuccinate synthase (397 aa).

8–16 (AYSGGLDTS) serves as a coordination point for ATP. The L-citrulline site is built by tyrosine 86 and serine 91. Glycine 116 provides a ligand contact to ATP. L-aspartate is bound by residues threonine 118, asparagine 122, and aspartate 123. Asparagine 122 lines the L-citrulline pocket. The L-citrulline site is built by arginine 126, serine 175, serine 184, glutamate 260, and tyrosine 272.

Belongs to the argininosuccinate synthase family. Type 1 subfamily. As to quaternary structure, homotetramer.

The protein localises to the cytoplasm. It carries out the reaction L-citrulline + L-aspartate + ATP = 2-(N(omega)-L-arginino)succinate + AMP + diphosphate + H(+). The protein operates within amino-acid biosynthesis; L-arginine biosynthesis; L-arginine from L-ornithine and carbamoyl phosphate: step 2/3. The chain is Argininosuccinate synthase from Clostridium botulinum (strain Kyoto / Type A2).